A 230-amino-acid chain; its full sequence is Large ribosomal subunit protein uL1c (230 aa).

It belongs to the universal ribosomal protein uL1 family. Part of the 50S ribosomal subunit.

It is found in the plastid. The protein localises to the chloroplast. Its function is as follows. Binds directly to 23S rRNA. Might be involved in E site tRNA release (Potential). The chain is Large ribosomal subunit protein uL1c (rpl1) from Thalassiosira pseudonana (Marine diatom).